The following is a 396-amino-acid chain: uncharacterized protein (396 aa).

12 consecutive transmembrane segments (helical) span residues 8 to 28 (TASGMYINYFFLGMVNIILAS), 44 to 64 (ISYVIAAIGFGKLLTYGISGV), 73 to 93 (PLVVASAGIMAVFLVGIPLSP), 97 to 117 (LAFVFALLAGVANSAMDAGTY), 133 to 153 (VLVKAFMSVGAALLPLLITFL), 158 to 178 (MFYGFAFYLPAAVYLLNIIYL), 213 to 233 (ALIIIGFTSTALFTVSQIWLP), 250 to 270 (LLSYYSIGSLASVLLLAVLLN), 276 to 296 (VFITLLYPIITLCTLAVMLTV), 304 to 324 (ITAFFLGFSTAGVFQITITLM), 338 to 358 (IVATASSLASILLPIATGLIA), and 363 to 383 (IAHIFIFDFGIAVIGTAAAAF).

The protein belongs to the major facilitator superfamily.

The protein resides in the cell membrane. This is an uncharacterized protein from Bacillus subtilis (strain 168).